Reading from the N-terminus, the 358-residue chain is MSVCYRPPGNETLLSWKGSRATGTAFLLLAALLGLPGNGFVVWSLAGWRPTAGRPLAATLVLHLALADGAVLLLTPLFVAFLSRQAWPLGQVGCKAVYYVCALSMYASVLLTGLLSLQRCLAVTRPFLAPRLRSPALARRLLLGVWLAALVLAVPAAVYRHLWGDRVCQLCHPSAVHAAAHLSLETLTAFVLPFGTVLGCYGVTLARLRGARWGSGRQGTRVGRLVSAIVLAFGLLWAPYHAVNLLQAVAALAPPEGPLARLGGAGQAARAGTTALAFFSSSVNPVLYVFTAGDLLPRAGPRFLTRLFEGSGEARVGSRSREGTMELRTTPRLKVVGQGRGYGDPGGGGRMEKDSQEW.

Residues 1–24 (MSVCYRPPGNETLLSWKGSRATGT) are Extracellular-facing. A glycan (N-linked (GlcNAc...) asparagine) is linked at Asn10. The helical transmembrane segment at 25 to 45 (AFLLLAALLGLPGNGFVVWSL) threads the bilayer. The Cytoplasmic portion of the chain corresponds to 46–60 (AGWRPTAGRPLAATL). The chain crosses the membrane as a helical span at residues 61–81 (VLHLALADGAVLLLTPLFVAF). Residues 82 to 96 (LSRQAWPLGQVGCKA) are Extracellular-facing. A helical transmembrane segment spans residues 97–117 (VYYVCALSMYASVLLTGLLSL). Over 118–140 (QRCLAVTRPFLAPRLRSPALARR) the chain is Cytoplasmic. The chain crosses the membrane as a helical span at residues 141-161 (LLLGVWLAALVLAVPAAVYRH). Over 162–185 (LWGDRVCQLCHPSAVHAAAHLSLE) the chain is Extracellular. A helical transmembrane segment spans residues 186-206 (TLTAFVLPFGTVLGCYGVTLA). The Cytoplasmic segment spans residues 207-225 (RLRGARWGSGRQGTRVGRL). Residues 226–246 (VSAIVLAFGLLWAPYHAVNLL) traverse the membrane as a helical segment. Over 247 to 275 (QAVAALAPPEGPLARLGGAGQAARAGTTA) the chain is Extracellular. A helical membrane pass occupies residues 276 to 296 (LAFFSSSVNPVLYVFTAGDLL). The Cytoplasmic segment spans residues 297 to 358 (PRAGPRFLTR…GRMEKDSQEW (62 aa)). The interval 315 to 358 (RVGSRSREGTMELRTTPRLKVVGQGRGYGDPGGGGRMEKDSQEW) is disordered. Residues 338-349 (QGRGYGDPGGGG) are compositionally biased toward gly residues.

It belongs to the G-protein coupled receptor 1 family.

The protein localises to the cell membrane. Low-affinity receptor for leukotrienes including leukotriene B4. Mediates chemotaxis of granulocytes and macrophages. The response is mediated via G-proteins that activate a phosphatidylinositol-calcium second messenger system. This is Leukotriene B4 receptor 2 (Ltb4r2) from Rattus norvegicus (Rat).